The following is a 171-amino-acid chain: NADH-quinone oxidoreductase subunit I (171 aa).

4Fe-4S ferredoxin-type domains follow at residues 63–92 (RRYENGEERCIACKLCEAVCPALAITIESD) and 102–131 (TRYDIDLTKCIFCGFCEESCPVDSIVETQI). [4Fe-4S] cluster is bound by residues cysteine 72, cysteine 75, cysteine 78, cysteine 82, cysteine 111, cysteine 114, cysteine 117, and cysteine 121.

Belongs to the complex I 23 kDa subunit family. In terms of assembly, NDH-1 is composed of 14 different subunits. Subunits NuoA, H, J, K, L, M, N constitute the membrane sector of the complex. It depends on [4Fe-4S] cluster as a cofactor.

Its subcellular location is the cell inner membrane. The catalysed reaction is a quinone + NADH + 5 H(+)(in) = a quinol + NAD(+) + 4 H(+)(out). Its function is as follows. NDH-1 shuttles electrons from NADH, via FMN and iron-sulfur (Fe-S) centers, to quinones in the respiratory chain. The immediate electron acceptor for the enzyme in this species is believed to be ubiquinone. Couples the redox reaction to proton translocation (for every two electrons transferred, four hydrogen ions are translocated across the cytoplasmic membrane), and thus conserves the redox energy in a proton gradient. This is NADH-quinone oxidoreductase subunit I from Paracidovorax citrulli (strain AAC00-1) (Acidovorax citrulli).